Here is a 119-residue protein sequence, read N- to C-terminus: Large ribosomal subunit protein bL20 (119 aa).

This sequence belongs to the bacterial ribosomal protein bL20 family.

Its function is as follows. Binds directly to 23S ribosomal RNA and is necessary for the in vitro assembly process of the 50S ribosomal subunit. It is not involved in the protein synthesizing functions of that subunit. The protein is Large ribosomal subunit protein bL20 of Nitrobacter hamburgensis (strain DSM 10229 / NCIMB 13809 / X14).